Consider the following 201-residue polypeptide: 3-isopropylmalate dehydratase small subunit (201 aa).

This sequence belongs to the LeuD family. LeuD type 1 subfamily. In terms of assembly, heterodimer of LeuC and LeuD.

The enzyme catalyses (2R,3S)-3-isopropylmalate = (2S)-2-isopropylmalate. It functions in the pathway amino-acid biosynthesis; L-leucine biosynthesis; L-leucine from 3-methyl-2-oxobutanoate: step 2/4. Its function is as follows. Catalyzes the isomerization between 2-isopropylmalate and 3-isopropylmalate, via the formation of 2-isopropylmaleate. This Escherichia coli O9:H4 (strain HS) protein is 3-isopropylmalate dehydratase small subunit.